A 487-amino-acid polypeptide reads, in one-letter code: Catalase (487 aa).

Residues 1–20 form a disordered region; that stretch reads MSQRVLTTESGAPVADNQNS. Active-site residues include H54 and N127. Y337 contributes to the heme binding site.

The protein belongs to the catalase family. Requires heme as cofactor.

The enzyme catalyses 2 H2O2 = O2 + 2 H2O. Decomposes hydrogen peroxide into water and oxygen; serves to protect cells from the toxic effects of hydrogen peroxide. The chain is Catalase (katA) from Streptomyces coelicolor (strain ATCC BAA-471 / A3(2) / M145).